A 780-amino-acid polypeptide reads, in one-letter code: ATP-dependent 6-phosphofructokinase, muscle type (780 aa).

Threonine 2 is subject to N-acetylthreonine. Residues 2–390 (THEEHHAAKT…NWEVYKLLAH (389 aa)) form an N-terminal catalytic PFK domain 1 region. Residues glycine 25, 88–89 (RC), and 118–121 (GDGS) each bind ATP. A Mg(2+)-binding site is contributed by aspartate 119. Residue serine 133 is modified to Phosphoserine. Substrate contacts are provided by residues 164-166 (SID), arginine 201, 208-210 (MGR), glutamate 264, arginine 292, and 298-301 (HVQR). The active-site Proton acceptor is aspartate 166. Serine 377 carries the phosphoserine modification. The tract at residues 391-401 (VRPPVSKSGSH) is interdomain linker. Residues 402–780 (TVAVMNVGAP…TRKRSGEAAV (379 aa)) form a C-terminal regulatory PFK domain 2 region. Residues arginine 471 and 528–532 (TVSNN) each bind beta-D-fructose 2,6-bisphosphate. Residue serine 530 is glycosylated (O-linked (GlcNAc) serine). The residue at position 557 (lysine 557) is an N6-(2-hydroxyisobutyryl)lysine. Residues arginine 566, 573 to 575 (MGG), glutamate 629, arginine 655, and 661 to 664 (HMQQ) contribute to the beta-D-fructose 2,6-bisphosphate site. Serine 667 bears the Phosphoserine mark. Residue arginine 735 participates in beta-D-fructose 2,6-bisphosphate binding. Residue serine 775 is modified to Phosphoserine.

The protein belongs to the phosphofructokinase type A (PFKA) family. ATP-dependent PFK group I subfamily. Eukaryotic two domain clade 'E' sub-subfamily. In terms of assembly, homo- and heterotetramers. Phosphofructokinase (PFK) enzyme functions as a tetramer composed of different combinations of 3 types of subunits, called PFKM (where M stands for Muscle), PFKL (Liver) and PFKP (Platelet). The composition of the PFK tetramer differs according to the tissue type it is present in. In muscles, it is composed of 4 PFKM subunits (also called M4). In the liver, the predominant form is a tetramer of PFKL subunits (L4). In erythrocytes, both PFKM and PFKL subunits randomly tetramerize to form M4, L4 and other combinations (ML3, M2L2, M3L). The kinetic and regulatory properties of the tetrameric enzyme are dependent on the subunit composition, hence can vary across tissues. Interacts (via C-terminus) with HK1 (via N-terminal spermatogenic cell-specific region). The cofactor is Mg(2+). GlcNAcylation decreases enzyme activity.

The protein localises to the cytoplasm. It catalyses the reaction beta-D-fructose 6-phosphate + ATP = beta-D-fructose 1,6-bisphosphate + ADP + H(+). It participates in carbohydrate degradation; glycolysis; D-glyceraldehyde 3-phosphate and glycerone phosphate from D-glucose: step 3/4. Its activity is regulated as follows. Allosterically activated by ADP, AMP, or fructose 2,6-bisphosphate, and allosterically inhibited by ATP or citrate. Catalyzes the phosphorylation of D-fructose 6-phosphate to fructose 1,6-bisphosphate by ATP, the first committing step of glycolysis. The protein is ATP-dependent 6-phosphofructokinase, muscle type (PFKM) of Homo sapiens (Human).